An 834-amino-acid polypeptide reads, in one-letter code: Probable basic-leucine zipper transcription factor D (834 aa).

A disordered region spans residues 83-160 (NNNNMLNDHS…SNNNSSSEGE (78 aa)). Residues 90–111 (DHSSSPMRVPNSSPSLYNNSIE) show a composition bias toward polar residues. Low complexity predominate over residues 119-157 (DNSNNNNNNNNNINVNDINVNDINSNSTNNNESNNNSSS). Positions 211-246 (SEQQQQQQQQQQQQQQQQQQQQQQQQQHQHLLQEHQ) form a coiled coil. Positions 378-405 (VVDPPTHNQEDERNVKKQRRLIKNRESA) are disordered. The bZIP domain occupies 391 to 454 (NVKKQRRLIK…KQLAAQNSNS (64 aa)). The interval 393–402 (KKQRRLIKNR) is basic motif. The segment at 407–414 (LSRMRKKI) is leucine-zipper. Disordered regions lie at residues 455–504 (NNNS…QQQS) and 550–712 (LSMS…KTPQ). Residues 550–595 (LSMSDSESSPQKSLRLSSNHHSLPDGTFNTIPIDQQTTATTNTKSL) are compositionally biased toward polar residues. 2 stretches are compositionally biased toward low complexity: residues 616-651 (NNNN…NNNN) and 694-707 (TTTT…TTST).

Belongs to the bZIP family.

Its subcellular location is the nucleus. Functionally, probable transcriptional regulator. This is Probable basic-leucine zipper transcription factor D (bzpD) from Dictyostelium discoideum (Social amoeba).